The primary structure comprises 367 residues: Mating-type protein ALPHA2 (367 aa).

Positions 273–338 form a DNA-binding region, homeobox; TALE-type; it reads GADAIDSEKL…NKRRTGAKKR (66 aa).

This sequence belongs to the TALE/M-ATYP homeobox family. As to quaternary structure, forms a heterodimer with A1.

Its subcellular location is the nucleus. Its function is as follows. Mating type proteins are sequence specific DNA-binding proteins that act as master switches in yeast differentiation by controlling gene expression in a cell type-specific fashion. Transcriptional corepressor that acts in conjunction with A1 to repress transcription of haploid-specific genes. In Yarrowia lipolytica (strain CLIB 122 / E 150) (Yeast), this protein is Mating-type protein ALPHA2 (MATB2).